Reading from the N-terminus, the 413-residue chain is Putative competence-damage inducible protein (413 aa).

Belongs to the CinA family.

The chain is Putative competence-damage inducible protein from Acetivibrio thermocellus (strain ATCC 27405 / DSM 1237 / JCM 9322 / NBRC 103400 / NCIMB 10682 / NRRL B-4536 / VPI 7372) (Clostridium thermocellum).